Here is a 125-residue protein sequence, read N- to C-terminus: Small ribosomal subunit protein uS13 (125 aa).

This sequence belongs to the universal ribosomal protein uS13 family. Part of the 30S ribosomal subunit. Forms a loose heterodimer with protein S19. Forms two bridges to the 50S subunit in the 70S ribosome.

In terms of biological role, located at the top of the head of the 30S subunit, it contacts several helices of the 16S rRNA. In the 70S ribosome it contacts the 23S rRNA (bridge B1a) and protein L5 of the 50S subunit (bridge B1b), connecting the 2 subunits; these bridges are implicated in subunit movement. Contacts the tRNAs in the A and P-sites. This is Small ribosomal subunit protein uS13 from Rickettsia massiliae (strain Mtu5).